The chain runs to 626 residues: Leucine-rich repeat and fibronectin type-III domain-containing protein 3 (626 aa).

The signal sequence occupies residues 1–16; sequence MAVLPLLLCLLPLAPA. At 17–539 the chain is on the extracellular side; sequence SSPPQPATSS…PHAPFLGGTM (523 aa). The region spanning 19–59 is the LRRNT domain; it reads PPQPATSSPCPRRCRCQTQSLPLSVLCPGAGLLFVPPSLDR. LRR repeat units follow at residues 84–105, 108–129, 132–153, 157–178, 181–202, and 205–226; these read GLLH…AFAD, ALRA…QLRG, NLRH…ALDD, TLED…ALGR, NVNT…AFSR, and KLAR…PLFS. An LRRCT domain is found at 249 to 295; it reads NPLHCNCELVWLRRLAREDDLEACASPPALGGRYFWAVGEEEFVCEP. Positions 295-382 constitute an Ig-like domain; that stretch reads PPVVTHRSPP…GEATAAVELT (88 aa). The 88-residue stretch at 308–395 folds into the Fibronectin type-III 1 domain; it reads PAGRPAALRC…PPPPQLANST (88 aa). Residues Cys317 and Cys366 are joined by a disulfide bond. 3 N-linked (GlcNAc...) asparagine glycosylation sites follow: Asn339, Asn348, and Asn393. The segment at 382-423 is disordered; the sequence is TVGPPPPPQLANSTSCDPPRDGEPDALTPPSAASASAKVADT. The segment covering 406–423 has biased composition (low complexity); that stretch reads DALTPPSAASASAKVADT. Positions 425–523 constitute a Fibronectin type-III 2 domain; that stretch reads APTDRGVQVT…GCARFSTEPA (99 aa). A helical membrane pass occupies residues 540–560; that stretch reads IIALGGVIVASVLVFIFVLLL. Residues 561 to 626 lie on the Cytoplasmic side of the membrane; it reads RYKVHGVQPP…WGPSHEPAGP (66 aa).

This sequence belongs to the LRFN family. As to quaternary structure, can form heteromeric complexes with LRFN1, LRFN2, LRFN4 and LRFN5. Able to form homomeric complexes across cell junctions, between adjacent cells. Does not interact with DLG4. In terms of processing, N-glycosylated. In terms of tissue distribution, expressed in brain. Within brain, expressed in hippocampus, cerebellum, olfactory bulb and forebrain (at protein level).

It is found in the cell membrane. It localises to the cell projection. The protein localises to the axon. The protein resides in the dendrite. Its subcellular location is the synapse. It is found in the presynaptic cell membrane. It localises to the postsynaptic cell membrane. Cell adhesion molecule that mediates homophilic cell-cell adhesion in a Ca(2+)-independent manner. Promotes neurite outgrowth in hippocampal neurons. This is Leucine-rich repeat and fibronectin type-III domain-containing protein 3 from Rattus norvegicus (Rat).